The sequence spans 201 residues: Heat shock protein beta-1 (201 aa).

Omega-N-methylarginine is present on R12. Position 15 is a phosphoserine; by MAPKAPK2 and MAPKAPK3 (S15). S27 is modified (phosphoserine). Residues 68-201 (AYNRALSRQL…AGKSEQPENK (134 aa)) are interaction with TGFB1I1. The sHSP domain occupies 72–180 (ALSRQLSSGV…QSAEITIPVT (109 aa)). Residues S74 and S78 each carry the phosphoserine; by MAPKAPK2, MAPKAPK3 and MAPKAPK5 modification. Phosphoserine occurs at positions 79, 82, and 94. K119 is modified (N6-acetyllysine). Residue T170 is modified to Phosphothreonine. A phosphoserine mark is found at S172 and S195.

Belongs to the small heat shock protein (HSP20) family. As to quaternary structure, homooligomer. Homodimer; becomes monomeric upon activation. Heterooligomer; with HSPB6. Associates with alpha- and beta-tubulin. Interacts with TGFB1I1. Interacts with CRYAB. Interacts with HSPB8. Interacts with HSPBAP1. Post-translationally, phosphorylated upon exposure to protein kinase C activators and heat shock. Phosphorylation by MAPKAPK2 and MAPKAPK3 in response to stress dissociates HSPB1 from large small heat-shock protein (sHsps) oligomers and impairs its chaperone activity and ability to protect against oxidative stress effectively. Phosphorylation by MAPKAPK5 in response to PKA stimulation induces F-actin rearrangement.

The protein localises to the cytoplasm. It is found in the nucleus. The protein resides in the cytoskeleton. It localises to the spindle. Its function is as follows. Small heat shock protein which functions as a molecular chaperone probably maintaining denatured proteins in a folding-competent state. Plays a role in stress resistance and actin organization. Through its molecular chaperone activity may regulate numerous biological processes including the phosphorylation and the axonal transport of neurofilament proteins. This chain is Heat shock protein beta-1 (HSPB1), found in Bos taurus (Bovine).